We begin with the raw amino-acid sequence, 570 residues long: Glycine--tRNA ligase (570 aa).

2 residues coordinate substrate: Arg99 and Glu165. ATP is bound by residues Arg197 to Glu199, Leu207 to Phe212, Glu324 to Cys325, and Gly443 to Arg446. Phe212–Glu216 is a binding site for substrate. Glu439–Gly443 contributes to the substrate binding site.

The protein belongs to the class-II aminoacyl-tRNA synthetase family.

The protein localises to the cytoplasm. The enzyme catalyses tRNA(Gly) + glycine + ATP = glycyl-tRNA(Gly) + AMP + diphosphate. Catalyzes the attachment of glycine to tRNA(Gly). The chain is Glycine--tRNA ligase from Thermococcus kodakarensis (strain ATCC BAA-918 / JCM 12380 / KOD1) (Pyrococcus kodakaraensis (strain KOD1)).